The following is a 302-amino-acid chain: Ribosomal RNA small subunit methyltransferase A (302 aa).

The S-adenosyl-L-methionine site is built by His15, Leu17, Gly42, Glu64, Asp89, and Asn109. The tract at residues 275-302 (DAASADGHDHGDGSGQGESSPGGARDQI) is disordered.

Belongs to the class I-like SAM-binding methyltransferase superfamily. rRNA adenine N(6)-methyltransferase family. RsmA subfamily.

The protein localises to the cytoplasm. The enzyme catalyses adenosine(1518)/adenosine(1519) in 16S rRNA + 4 S-adenosyl-L-methionine = N(6)-dimethyladenosine(1518)/N(6)-dimethyladenosine(1519) in 16S rRNA + 4 S-adenosyl-L-homocysteine + 4 H(+). Functionally, specifically dimethylates two adjacent adenosines (A1518 and A1519) in the loop of a conserved hairpin near the 3'-end of 16S rRNA in the 30S particle. May play a critical role in biogenesis of 30S subunits. This Parasynechococcus marenigrum (strain WH8102) protein is Ribosomal RNA small subunit methyltransferase A.